The chain runs to 417 residues: MEQTKALNALEPFIVLSKSATSPRAAADLVTRVTSAPNTFIFTELLQTPQIQSLEYSHEFSSYLTLLQIFSHGTYADYIANASALPALNDDQKLKLRQLSLLTLVANDGSNVPLDYDAMQRENNQAQPPNQSYASLTRRLELSSARELEELVISAIYAGLIEGQLDPANEMVQINSVAALRDVPARGVNGLLSSLQGWAGRCQATLQELEATMANLRDEADRRATEEQEWNNKMSQLLEDEQKGAVPSSSSSSLPFSWFNNTRGGGGGGDGAGAGGSFRGSGYSRGGGLSQGYRSSQRGSHQQHQNQSRQQQNHHHHHQSNQSGTNSLLTSGGGSYLSFREGPSAVSPSAAAGLMGSSTSFAALGGMETGSGSGSGPLGKRGSSDMDDSEEDIDDDTMDLDDEGDETKRGSKRKLTA.

Residues 2 to 179 (EQTKALNALE…EMVQINSVAA (178 aa)) form the PCI domain. The tract at residues 240–417 (DEQKGAVPSS…KRGSKRKLTA (178 aa)) is disordered. A compositionally biased stretch (gly residues) spans 263–290 (RGGGGGGDGAGAGGSFRGSGYSRGGGLS). Low complexity-rich tracts occupy residues 291–311 (QGYRSSQRGSHQQHQNQSRQQ), 320–330 (SNQSGTNSLLT), and 343–352 (PSAVSPSAAA). The span at 367-379 (METGSGSGSGPLG) shows a compositional bias: gly residues. Acidic residues predominate over residues 385–405 (DMDDSEEDIDDDTMDLDDEGD).

Belongs to the CSN7/EIF3M family. CSN7 subfamily. Component of the COP9 signalosome (CSN) complex.

The protein localises to the cytoplasm. It localises to the nucleus. Functionally, component of the COP9 signalosome (CSN) complex that acts as an regulator of the ubiquitin (Ubl) conjugation pathway by mediating the deneddylation of the cullin subunit of SCF-type E3 ubiquitin-protein ligase complexes. The CSN complex is involved in the regulation of the circadian clock through its control of the stability of the SCF(FWD1) complex. This is COP9 signalosome complex subunit 7a (csn-7a) from Neurospora crassa (strain ATCC 24698 / 74-OR23-1A / CBS 708.71 / DSM 1257 / FGSC 987).